Reading from the N-terminus, the 120-residue chain is Ribosome-binding factor A (120 aa).

It belongs to the RbfA family. As to quaternary structure, monomer. Binds 30S ribosomal subunits, but not 50S ribosomal subunits or 70S ribosomes.

It is found in the cytoplasm. One of several proteins that assist in the late maturation steps of the functional core of the 30S ribosomal subunit. Associates with free 30S ribosomal subunits (but not with 30S subunits that are part of 70S ribosomes or polysomes). Required for efficient processing of 16S rRNA. May interact with the 5'-terminal helix region of 16S rRNA. The sequence is that of Ribosome-binding factor A from Rickettsia rickettsii (strain Iowa).